Reading from the N-terminus, the 517-residue chain is MEELQGYLEKDGSRQQNFLYPLIFQEYIYTLAHDHGLNSSIFYEPMEIVGLGYDNKSSSVLVKRLITRMYQQNSLIYSMNDFNQNRFVGHNNSFYSNLDSQMVSEGFAVIVEIPFSLRLVPSSEEIPKSQNLRSIHSIFPFLEDKLSHLNYVLDILIPYPIHLEILVQILQCWIQDVPSLHFLRLFLHEFHNWNNLITPTKSISVFSKENKRLFRILYNSYVSEYEFVFVFLRKQSYYLRSTSSRAFLERTHFYVKIEHLIDIDVCHNHFQKILWFFKDSFMHYVRYKGKAILASRGTYLLIKKWKCYLVNFWQYNFHFWSKPYRIHINPFSNYSFYFLGYISSVLINPSAVKNQMLENFYLVDTLTQKFDTIVPVIPLIGSLSKAKFCTILGHPISKPIWAELSDSDIIDRFGRICRNLSHYHSGSSKKQSLYRIKYILRLSCARTLARKHKSTVRNLLQRLGSGLLEEFFTEEEQVISPIFPKTTLFPLHGSHKERIWYLDIIRINDLANYLDWS.

This sequence belongs to the intron maturase 2 family. MatK subfamily.

The protein resides in the plastid. Its subcellular location is the chloroplast. Usually encoded in the trnK tRNA gene intron. Probably assists in splicing its own and other chloroplast group II introns. This is Maturase K from Trillium maculatum (Spotted wakerobin).